The sequence spans 501 residues: Glycogen synthase 1 (501 aa).

K18 is a binding site for ADP-alpha-D-glucose.

The protein belongs to the glycosyltransferase 1 family. Bacterial/plant glycogen synthase subfamily.

The catalysed reaction is [(1-&gt;4)-alpha-D-glucosyl](n) + ADP-alpha-D-glucose = [(1-&gt;4)-alpha-D-glucosyl](n+1) + ADP + H(+). Its pathway is glycan biosynthesis; glycogen biosynthesis. In terms of biological role, synthesizes alpha-1,4-glucan chains using ADP-glucose. This Geobacter sulfurreducens (strain ATCC 51573 / DSM 12127 / PCA) protein is Glycogen synthase 1.